The chain runs to 254 residues: Phosphate import ATP-binding protein PstB (254 aa).

The 241-residue stretch at 9–249 (MSVKDLDLFY…PVDKRTEDYI (241 aa)) folds into the ABC transporter domain. 41–48 (GPSGCGKS) is a binding site for ATP.

The protein belongs to the ABC transporter superfamily. Phosphate importer (TC 3.A.1.7) family. In terms of assembly, the complex is composed of two ATP-binding proteins (PstB), two transmembrane proteins (PstC and PstA) and a solute-binding protein (PstS).

The protein localises to the cell membrane. The enzyme catalyses phosphate(out) + ATP + H2O = ADP + 2 phosphate(in) + H(+). In terms of biological role, part of the ABC transporter complex PstSACB involved in phosphate import. Responsible for energy coupling to the transport system. The protein is Phosphate import ATP-binding protein PstB of Clostridioides difficile (strain 630) (Peptoclostridium difficile).